The following is a 298-amino-acid chain: Probable endonuclease 4 (298 aa).

Residues H70, H111, E146, D180, H183, H215, D228, H230, and E260 each contribute to the Zn(2+) site.

This sequence belongs to the AP endonuclease 2 family. The cofactor is Zn(2+).

It catalyses the reaction Endonucleolytic cleavage to 5'-phosphooligonucleotide end-products.. In terms of biological role, endonuclease IV plays a role in DNA repair. It cleaves phosphodiester bonds at apurinic or apyrimidinic (AP) sites, generating a 3'-hydroxyl group and a 5'-terminal sugar phosphate. In Halalkalibacterium halodurans (strain ATCC BAA-125 / DSM 18197 / FERM 7344 / JCM 9153 / C-125) (Bacillus halodurans), this protein is Probable endonuclease 4.